The sequence spans 196 residues: Large ribosomal subunit protein uL11m (196 aa).

The protein belongs to the universal ribosomal protein uL11 family. Component of the mitochondrial ribosome large subunit (39S) which comprises a 16S rRNA and about 50 distinct proteins.

It localises to the mitochondrion. This Drosophila melanogaster (Fruit fly) protein is Large ribosomal subunit protein uL11m (mRpL11).